The sequence spans 155 residues: Regulatory protein RecX (155 aa).

It belongs to the RecX family.

The protein resides in the cytoplasm. Modulates RecA activity. This chain is Regulatory protein RecX, found in Pseudomonas fluorescens (strain SBW25).